The following is a 579-amino-acid chain: uncharacterized protein (579 aa).

This sequence belongs to the UbiD family.

This is an uncharacterized protein from Chlamydia trachomatis serovar D (strain ATCC VR-885 / DSM 19411 / UW-3/Cx).